Reading from the N-terminus, the 329-residue chain is Beta-tectorin (329 aa).

The first 17 residues, 1–17 (MVAVTVYLMVILAQAFA), serve as a signal peptide directing secretion. Residues 19-287 (PCTPNKADVI…VTCDKRKQRM (269 aa)) form the ZP domain. N-linked (GlcNAc...) asparagine glycans are attached at residues Asn-80, Asn-104, Asn-116, and Asn-145. Cys-204 and Cys-264 form a disulfide bridge. Gly-304 carries GPI-anchor amidated glycine lipidation. A propeptide spans 305–329 (LSRFYMLSDVIFHLLFAIGFCAILL) (removed in mature form).

May form homomeric filament after self-association or heteromeric filament after association with alpha-tectorin. Post-translationally, the N-terminus is blocked. In terms of processing, N-glycosylated. The presence of a hydrophobic C-terminus preceded by a potential cleavage site strongly suggests that tectorins are synthesized as glycosylphosphatidylinositol-linked, membrane-bound precursors. Tectorins are targeted to the apical surface of the inner ear epithelia by the lipid and proteolytically released into the extracellular compartment. As to expression, exclusively expressed in the inner ear, where it is found in basilar papilla, clear cells, supporting cells, cuboidal cells and the lagena macula.

It is found in the cell membrane. Its subcellular location is the secreted. It localises to the extracellular space. The protein localises to the extracellular matrix. Its function is as follows. One of the major non-collagenous components of the tectorial membrane. The tectorial membrane is an extracellular matrix of the inner ear that covers the neuroepithelium of the cochlea and contacts the stereocilia bundles of specialized sensory hair cells. Sound induces movement of these hair cells relative to the tectorial membrane, deflects the stereocilia and leads to fluctuations in hair-cell membrane potential, transducing sound into electrical signals. The chain is Beta-tectorin (TECTB) from Gallus gallus (Chicken).